We begin with the raw amino-acid sequence, 137 residues long: Protein Flattop homolog (137 aa).

It belongs to the Flattop family.

The protein localises to the cytoplasm. It is found in the cytoskeleton. It localises to the flagellum axoneme. Its function is as follows. Microtubule inner protein (MIP) part of the dynein-decorated doublet microtubules (DMTs) in cilia axoneme. Acts as a regulator of cilium basal body docking and positioning in mono- and multiciliated cells. Regulates basal body docking and cilia formation in multiciliated lung cells. Regulates kinocilium positioning and stereocilia bundle morphogenesis in the inner ear. This is Protein Flattop homolog from Chlamydomonas reinhardtii (Chlamydomonas smithii).